The primary structure comprises 832 residues: pre-rRNA 2'-O-ribose RNA methyltransferase FTSJ3 (832 aa).

Residues G56, W58, D76, D92, and D117 each contribute to the S-adenosyl-L-methionine site. K157 functions as the Proton acceptor in the catalytic mechanism. Disordered regions lie at residues 332–358 (INLS…ADEM), 485–523 (RLER…LEEK), and 546–631 (DADE…GLVE). Basic and acidic residues-rich tracts occupy residues 345 to 358 (EEEK…ADEM) and 485 to 495 (RLERERREQGV). Residues 503–514 (EEEEEEEEEEEN) are compositionally biased toward acidic residues. Positions 570-579 (KTKKKGQKKK) are enriched in basic residues. Residues 600 to 618 (AEAEAEQSSDDDSSSDEEG) show a composition bias toward acidic residues. Residues 726–758 (IKKVAEAKARKKRRMLKKMEQMKKKAEAVVSTV) adopt a coiled-coil conformation. The tract at residues 795 to 832 (GPRVRRPPGVKGQFKVVDSRLKKDVRAQKRKEQKKRRK) is disordered. The span at 811–821 (VDSRLKKDVRA) shows a compositional bias: basic and acidic residues. Over residues 822 to 832 (QKRKEQKKRRK) the composition is skewed to basic residues.

This sequence belongs to the class I-like SAM-binding methyltransferase superfamily. RNA methyltransferase RlmE family. SPB1 subfamily. In terms of assembly, interacts with NIP7.

The protein localises to the nucleus. It localises to the nucleolus. It carries out the reaction a ribonucleotide in rRNA + S-adenosyl-L-methionine = a 2'-O-methylribonucleotide in rRNA + S-adenosyl-L-homocysteine + H(+). RNA 2'-O-methyltransferase involved in the processing of the 34S pre-rRNA to 18S rRNA and in 40S ribosomal subunit formation. The protein is pre-rRNA 2'-O-ribose RNA methyltransferase FTSJ3 of Gallus gallus (Chicken).